Reading from the N-terminus, the 264-residue chain is tRNA (guanine-N(1)-)-methyltransferase (264 aa).

S-adenosyl-L-methionine contacts are provided by residues Gly-125 and 145-150 (LGDFVL).

Belongs to the RNA methyltransferase TrmD family. Homodimer.

It is found in the cytoplasm. The enzyme catalyses guanosine(37) in tRNA + S-adenosyl-L-methionine = N(1)-methylguanosine(37) in tRNA + S-adenosyl-L-homocysteine + H(+). In terms of biological role, specifically methylates guanosine-37 in various tRNAs. The sequence is that of tRNA (guanine-N(1)-)-methyltransferase from Burkholderia multivorans (strain ATCC 17616 / 249).